A 513-amino-acid chain; its full sequence is 2-isopropylmalate synthase (513 aa).

Residues 5–268 (LIIFDTTLRD…DIGVDTTQIV (264 aa)) enclose the Pyruvate carboxyltransferase domain. Residues aspartate 14, histidine 202, histidine 204, and asparagine 239 each contribute to the Mn(2+) site. Residues 394–513 (RFISLSQRSE…KAVQKINPQI (120 aa)) are regulatory domain.

It belongs to the alpha-IPM synthase/homocitrate synthase family. LeuA type 1 subfamily. Homodimer. Mn(2+) is required as a cofactor.

Its subcellular location is the cytoplasm. The enzyme catalyses 3-methyl-2-oxobutanoate + acetyl-CoA + H2O = (2S)-2-isopropylmalate + CoA + H(+). It participates in amino-acid biosynthesis; L-leucine biosynthesis; L-leucine from 3-methyl-2-oxobutanoate: step 1/4. Catalyzes the condensation of the acetyl group of acetyl-CoA with 3-methyl-2-oxobutanoate (2-ketoisovalerate) to form 3-carboxy-3-hydroxy-4-methylpentanoate (2-isopropylmalate). In Cupriavidus necator (strain ATCC 17699 / DSM 428 / KCTC 22496 / NCIMB 10442 / H16 / Stanier 337) (Ralstonia eutropha), this protein is 2-isopropylmalate synthase.